The following is a 489-amino-acid chain: Glycogen synthase (489 aa).

Lys-15 serves as a coordination point for ADP-alpha-D-glucose.

The protein belongs to the glycosyltransferase 1 family. Bacterial/plant glycogen synthase subfamily.

It catalyses the reaction [(1-&gt;4)-alpha-D-glucosyl](n) + ADP-alpha-D-glucose = [(1-&gt;4)-alpha-D-glucosyl](n+1) + ADP + H(+). The protein operates within glycan biosynthesis; glycogen biosynthesis. Its function is as follows. Synthesizes alpha-1,4-glucan chains using ADP-glucose. The sequence is that of Glycogen synthase from Francisella tularensis subsp. mediasiatica (strain FSC147).